Consider the following 67-residue polypeptide: UPF0434 protein RALTA_A0561 (67 aa).

It belongs to the UPF0434 family.

The protein is UPF0434 protein RALTA_A0561 of Cupriavidus taiwanensis (strain DSM 17343 / BCRC 17206 / CCUG 44338 / CIP 107171 / LMG 19424 / R1) (Ralstonia taiwanensis (strain LMG 19424)).